The sequence spans 487 residues: Iron-sulfur cluster assembly SufBD family protein ycf24 (487 aa).

Belongs to the iron-sulfur cluster assembly SufBD family.

It localises to the plastid. Its subcellular location is the chloroplast. The sequence is that of Iron-sulfur cluster assembly SufBD family protein ycf24 (ycf24) from Porphyra purpurea (Red seaweed).